The chain runs to 274 residues: Diaminopimelate epimerase (274 aa).

The substrate site is built by N11, Q44, and N64. The active-site Proton donor is C73. Substrate is bound by residues 74–75, N157, N190, and 208–209; these read GN and ER. Catalysis depends on C217, which acts as the Proton acceptor. 218-219 is a substrate binding site; that stretch reads GS.

Belongs to the diaminopimelate epimerase family. As to quaternary structure, homodimer.

The protein localises to the cytoplasm. It carries out the reaction (2S,6S)-2,6-diaminopimelate = meso-2,6-diaminopimelate. Its pathway is amino-acid biosynthesis; L-lysine biosynthesis via DAP pathway; DL-2,6-diaminopimelate from LL-2,6-diaminopimelate: step 1/1. Catalyzes the stereoinversion of LL-2,6-diaminopimelate (L,L-DAP) to meso-diaminopimelate (meso-DAP), a precursor of L-lysine and an essential component of the bacterial peptidoglycan. This chain is Diaminopimelate epimerase, found in Escherichia coli O6:H1 (strain CFT073 / ATCC 700928 / UPEC).